The following is a 228-amino-acid chain: MRIDIVSIFPEFFGVLDISLLGRARQSGLIDLRLHDLRAFTHDRHRTVDDTPYGGGAGMVMRPEPWGEAMDEVLADDTDPVVIFPSPAGEVFTQAMAQELSAEPHLAFGCGRYEGIDQRVVDHTATRARVRLVSLGDYVLNGGEVAVMAMIEAIGRLVPGVVGNPASLVEESHSDGLLEHPSYTKPPEWRGLAVPDVLRSGNHGAIAAWRREQQLERTRRVRPDLLPD.

S-adenosyl-L-methionine contacts are provided by residues glycine 111 and 135-140 (LGDYVL).

It belongs to the RNA methyltransferase TrmD family. Homodimer.

The protein localises to the cytoplasm. It catalyses the reaction guanosine(37) in tRNA + S-adenosyl-L-methionine = N(1)-methylguanosine(37) in tRNA + S-adenosyl-L-homocysteine + H(+). Functionally, specifically methylates guanosine-37 in various tRNAs. The protein is tRNA (guanine-N(1)-)-methyltransferase of Clavibacter sepedonicus (Clavibacter michiganensis subsp. sepedonicus).